A 92-amino-acid polypeptide reads, in one-letter code: Cell division protein FtsB (92 aa).

The Cytoplasmic portion of the chain corresponds to 1-3 (MRF). The chain crosses the membrane as a helical span at residues 4 to 21 (FQVGLLCLALFVQYRLWF). The Periplasmic portion of the chain corresponds to 22–92 (GHNGVQDYTR…TFIRVLPAQQ (71 aa)). Residues 40–73 (LQTNEKLIKRNKVLTADIEDLKLGHEGIEERARN) adopt a coiled-coil conformation.

This sequence belongs to the FtsB family. In terms of assembly, part of a complex composed of FtsB, FtsL and FtsQ.

The protein resides in the cell inner membrane. Functionally, essential cell division protein. May link together the upstream cell division proteins, which are predominantly cytoplasmic, with the downstream cell division proteins, which are predominantly periplasmic. The chain is Cell division protein FtsB from Pseudoalteromonas translucida (strain TAC 125).